The chain runs to 395 residues: Elongation factor Tu (395 aa).

The 195-residue stretch at 10–204 (KPHVNIGTIG…AVDEYIPTPQ (195 aa)) folds into the tr-type G domain. Residues 19–26 (GHVDHGKT) are G1. 19 to 26 (GHVDHGKT) lines the GTP pocket. Thr26 provides a ligand contact to Mg(2+). Positions 60 to 64 (GITIS) are G2. A G3 region spans residues 81–84 (DCPG). GTP is bound by residues 81–85 (DCPGH) and 136–139 (NKCD). Residues 136-139 (NKCD) form a G4 region. Residues 174–176 (SAL) form a G5 region.

The protein belongs to the TRAFAC class translation factor GTPase superfamily. Classic translation factor GTPase family. EF-Tu/EF-1A subfamily. Monomer.

The protein resides in the cytoplasm. The enzyme catalyses GTP + H2O = GDP + phosphate + H(+). Functionally, GTP hydrolase that promotes the GTP-dependent binding of aminoacyl-tRNA to the A-site of ribosomes during protein biosynthesis. This chain is Elongation factor Tu, found in Geobacillus sp. (strain WCH70).